The sequence spans 250 residues: 3-deoxy-manno-octulosonate cytidylyltransferase (250 aa).

The protein belongs to the KdsB family.

It is found in the cytoplasm. It catalyses the reaction 3-deoxy-alpha-D-manno-oct-2-ulosonate + CTP = CMP-3-deoxy-beta-D-manno-octulosonate + diphosphate. The protein operates within nucleotide-sugar biosynthesis; CMP-3-deoxy-D-manno-octulosonate biosynthesis; CMP-3-deoxy-D-manno-octulosonate from 3-deoxy-D-manno-octulosonate and CTP: step 1/1. It functions in the pathway bacterial outer membrane biogenesis; lipopolysaccharide biosynthesis. Its function is as follows. Activates KDO (a required 8-carbon sugar) for incorporation into bacterial lipopolysaccharide in Gram-negative bacteria. This chain is 3-deoxy-manno-octulosonate cytidylyltransferase, found in Legionella pneumophila subsp. pneumophila (strain Philadelphia 1 / ATCC 33152 / DSM 7513).